The following is a 516-amino-acid chain: Probable 2-isopropylmalate synthase (516 aa).

The Pyruvate carboxyltransferase domain occupies 20–271 (VTVFDTTLRD…KTNIRTEYLV (252 aa)).

It belongs to the alpha-IPM synthase/homocitrate synthase family.

The enzyme catalyses 3-methyl-2-oxobutanoate + acetyl-CoA + H2O = (2S)-2-isopropylmalate + CoA + H(+). It participates in amino-acid biosynthesis; L-leucine biosynthesis; L-leucine from 3-methyl-2-oxobutanoate: step 1/4. Its function is as follows. Catalyzes the condensation of the acetyl group of acetyl-CoA with 3-methyl-2-oxobutanoate (2-oxoisovalerate) to form 3-carboxy-3-hydroxy-4-methylpentanoate (2-isopropylmalate). This Methanosarcina mazei (strain ATCC BAA-159 / DSM 3647 / Goe1 / Go1 / JCM 11833 / OCM 88) (Methanosarcina frisia) protein is Probable 2-isopropylmalate synthase (leuA).